The sequence spans 209 residues: CASP-like protein 1B1 (209 aa).

Residues 1 to 10 (MDLERGDKKP) are compositionally biased toward basic and acidic residues. The tract at residues 1 to 39 (MDLERGDKKPPPPPPPAPRTAAATTTTTTTPACSGKKRP) is disordered. At 1-49 (MDLERGDKKPPPPPPPAPRTAAATTTTTTTPACSGKKRPPLRDSLVALQ) the chain is on the cytoplasmic side. Over residues 19-32 (RTAAATTTTTTTPA) the composition is skewed to low complexity. A helical membrane pass occupies residues 50–70 (PVLLRAAAALAAAAAAAVMAL). The Extracellular segment spans residues 71–100 (DAQSYTAVVAIVGTRPLTQTFTAKFSDTPA). A helical membrane pass occupies residues 101-121 (FVYFVIANAIAAAYNLLVLLV). The Cytoplasmic segment spans residues 122-134 (RRRRRTTAGLVVR). The chain crosses the membrane as a helical span at residues 135 to 155 (MLDMVVMALLATGAAAAASMA). The Extracellular segment spans residues 156–180 (ELGRNGNARARWNPVCDRFGSFCRR). Residues 181-201 (GGAALAASFVGVALMLALNLL) traverse the membrane as a helical segment. The Cytoplasmic portion of the chain corresponds to 202 to 209 (SAASGAGC).

The protein belongs to the Casparian strip membrane proteins (CASP) family. As to quaternary structure, homodimer and heterodimers.

The protein resides in the cell membrane. The sequence is that of CASP-like protein 1B1 from Zea mays (Maize).